Here is a 774-residue protein sequence, read N- to C-terminus: E3 ubiquitin-protein ligase RFWD3 (774 aa).

Disordered stretches follow at residues 32–126 and 203–281; these read GTIE…TAGA and PYPL…SAME. A phosphoserine; by ATM and ATR mark is found at S59 and S75. A compositionally biased stretch (acidic residues) spans 92–103; that stretch reads LTEEVQPSEENM. A compositionally biased stretch (polar residues) spans 108–121; that stretch reads PGTSEEPSQGSGAN. Residues 223–242 show a composition bias toward acidic residues; it reads SDSDGSAEDEEVVVQAEEPE. The segment at 288-332 adopts an RING-type; degenerate zinc-finger fold; it reads CTICLEQWTNAGDHRISALRCGHLFGFRCISKWLKGQTRKCPQCN. Residues 358-403 are a coiled coil; that stretch reads RMKSDLLNEQMLRKQAELESAQCRLQLQVLIDKCTKLNSRVQDLEK. WD repeat units lie at residues 493–535, 536–568, and 583–628; these read IPMH…VVQT, YNTG…LIYD, and KARC…SHKP.

In terms of assembly, interacts with MDM2 and p53/TP53. Binds to the RPA complex via direct interaction with RPA2. Interacts with RAD51. In terms of processing, phosphorylated at Ser-59 and Ser-75 upon DNA damage by ATM or ATR. ATM phosphorylation occurs at early times upon DNA damage, while ATR is the major kinase at later times. Phosphorylation by ATM and ATR is required to stabilize p53/TP53. Part of the phosphorylation depends upon RPA2 presence.

It is found in the nucleus. The protein resides in the PML body. It localises to the cytoplasm. The catalysed reaction is S-ubiquitinyl-[E2 ubiquitin-conjugating enzyme]-L-cysteine + [acceptor protein]-L-lysine = [E2 ubiquitin-conjugating enzyme]-L-cysteine + N(6)-ubiquitinyl-[acceptor protein]-L-lysine.. It participates in protein modification; protein ubiquitination. E3 ubiquitin-protein ligase required for the repair of DNA interstrand cross-links (ICL) in response to DNA damage. Plays a key role in RPA-mediated DNA damage signaling and repair. Acts by mediating ubiquitination of the RPA complex (RPA1, RPA2 and RPA3 subunits) and RAD51 at stalled replication forks, leading to remove them from DNA damage sites and promote homologous recombination. Also mediates the ubiquitination of p53/TP53 in the late response to DNA damage, and acts as a positive regulator of p53/TP53 stability, thereby regulating the G1/S DNA damage checkpoint. May act by catalyzing the formation of short polyubiquitin chains on p53/TP53 that are not targeted to the proteasome. In response to ionizing radiation, interacts with MDM2 and enhances p53/TP53 ubiquitination, possibly by restricting MDM2 from extending polyubiquitin chains on ubiquitinated p53/TP53. Required to translesion DNA synthesis across DNA-protein cross-link adducts by catalyzing ubiquitination of proteins on single-stranded DNA (ssDNA). The chain is E3 ubiquitin-protein ligase RFWD3 (Rfwd3) from Mus musculus (Mouse).